Here is a 576-residue protein sequence, read N- to C-terminus: MAGUK p55 subfamily member 7 (576 aa).

L27 domains follow at residues 10 to 63 and 65 to 122; these read SDTG…YEKE and PMPV…YDPV. One can recognise a PDZ domain in the interval 139-220; sequence IIRLVKNREP…AITFKIIPSI (82 aa). Residues 228–298 form the SH3 domain; the sequence is DGKMFVKALF…PSKQFQERRF (71 aa). Residues 368 to 560 enclose the Guanylate kinase-like domain; sequence YRLVILVGPV…AYNELRSTLE (193 aa).

It belongs to the MAGUK family.

The protein localises to the membrane. The protein resides in the cell junction. Its subcellular location is the tight junction. It localises to the adherens junction. In terms of biological role, acts as an important adapter that promotes epithelial cell polarity and tight junction formation. Involved in the assembly of protein complexes at sites of cell-cell contact. This chain is MAGUK p55 subfamily member 7 (mpp7), found in Xenopus tropicalis (Western clawed frog).